A 297-amino-acid chain; its full sequence is Heme A synthase (297 aa).

The Cytoplasmic portion of the chain corresponds to 1-6 (MNRKLS). Residues 7-27 (IFSAFVTFTMMIVLLMGGTVT) form a helical membrane-spanning segment. Residues 28–62 (KTDSGNGCGTDWPLCHGELIPTNPSVETMIEYSHR) lie on the Extracellular side of the membrane. Residues Cys35 and Cys42 are joined by a disulfide bond. Glu58 is an active-site residue. A heme o-binding site is contributed by His61. A helical membrane pass occupies residues 63-83 (AVTGVVGLLIIALCLWTLVAF). At 84-90 (KDRLDIK) the chain is on the cytoplasmic side. Residues 91–111 (IFAFLAFIFMLIQSIVGAGAV) traverse the membrane as a helical segment. At 112–121 (VWQQSDLVMA) the chain is on the extracellular side. A helical transmembrane segment spans residues 122–142 (LHFGISLISFASLLILTILIM). His123 serves as a coordination point for heme o. Topologically, residues 143-160 (ERSGQEFRESVPAFLRKL) are cytoplasmic. A helical membrane pass occupies residues 161 to 181 (LYGLLIYTLIVVYTGAFVRHV). Residues 182–201 (GATYACVGWPVCSQPTMTFE) are Extracellular-facing. Cys187 and Cys193 form a disulfide bridge. The helical transmembrane segment at 202–222 (AWVQMIHRILAGLLFFYTLFV) threads the bilayer. Heme b is bound at residue His208. Topologically, residues 223 to 236 (HYTAIRLKHRTSRT) are cytoplasmic. A helical transmembrane segment spans residues 237 to 257 (GMLFATFFISCQVATGAWIVL). Residues 258–262 (GGHAT) lie on the Extracellular side of the membrane. A helical membrane pass occupies residues 263–283 (YVPLLHAFLITCYFGVISYLA). His268 contacts heme b. Residues 284-297 (YHAFRTRKKDSRLR) lie on the Cytoplasmic side of the membrane.

Belongs to the COX15/CtaA family. Type 1 subfamily. In terms of assembly, interacts with CtaB. Heme b serves as cofactor.

It is found in the cell membrane. It carries out the reaction Fe(II)-heme o + 2 A + H2O = Fe(II)-heme a + 2 AH2. Its pathway is porphyrin-containing compound metabolism; heme A biosynthesis; heme A from heme O: step 1/1. Functionally, catalyzes the conversion of heme O to heme A by two successive hydroxylations of the methyl group at C8. The first hydroxylation forms heme I, the second hydroxylation results in an unstable dihydroxymethyl group, which spontaneously dehydrates, resulting in the formyl group of heme A. This is Heme A synthase from Exiguobacterium sibiricum (strain DSM 17290 / CCUG 55495 / CIP 109462 / JCM 13490 / 255-15).